A 458-amino-acid polypeptide reads, in one-letter code: Argininosuccinate lyase (458 aa).

This sequence belongs to the lyase 1 family. Argininosuccinate lyase subfamily.

Its subcellular location is the cytoplasm. The enzyme catalyses 2-(N(omega)-L-arginino)succinate = fumarate + L-arginine. It functions in the pathway amino-acid biosynthesis; L-arginine biosynthesis; L-arginine from L-ornithine and carbamoyl phosphate: step 3/3. This Heliobacterium mobile (Heliobacillus mobilis) protein is Argininosuccinate lyase.